A 284-amino-acid chain; its full sequence is MSAQLINGKEVSQKHLQAIAEAVAQRQQDNLHTPCLAVVLVGGDPAGAVYVRNKKTACQKCGIKSLSYELPESTSQEELLALVDRLNADSEVDGILVQLPLPKHLDSQAILERISPDKDVDGFHPYNVGRLAVKMPLMRPCTPKGVMTLLEAYGIDPKGKKAVVVGASNIVGRPQALELLLARATVTVCHSATENLADEVAAADILVVGVGIPNFVKGGWIKPGAVVIDVGINRLDDGSLCGDVEFETAKERAAMITPVPGGVGPMTIATLMENTLHAASLHDA.

Residues 166–168, S191, and I232 each bind NADP(+); that span reads GAS.

Belongs to the tetrahydrofolate dehydrogenase/cyclohydrolase family. As to quaternary structure, homodimer.

It catalyses the reaction (6R)-5,10-methylene-5,6,7,8-tetrahydrofolate + NADP(+) = (6R)-5,10-methenyltetrahydrofolate + NADPH. The catalysed reaction is (6R)-5,10-methenyltetrahydrofolate + H2O = (6R)-10-formyltetrahydrofolate + H(+). It participates in one-carbon metabolism; tetrahydrofolate interconversion. Catalyzes the oxidation of 5,10-methylenetetrahydrofolate to 5,10-methenyltetrahydrofolate and then the hydrolysis of 5,10-methenyltetrahydrofolate to 10-formyltetrahydrofolate. The polypeptide is Bifunctional protein FolD (Neisseria gonorrhoeae (strain ATCC 700825 / FA 1090)).